The following is a 420-amino-acid chain: Multifunctional CCA protein (420 aa).

Residues G8 and R11 each coordinate ATP. CTP contacts are provided by G8 and R11. 2 residues coordinate Mg(2+): D21 and D23. The ATP site is built by R91, R137, and R140. Residues R91, R137, and R140 each coordinate CTP. The 107-residue stretch at 228-334 (TFVHTMLVLQ…LKLFNRLDVW (107 aa)) folds into the HD domain.

This sequence belongs to the tRNA nucleotidyltransferase/poly(A) polymerase family. Bacterial CCA-adding enzyme type 1 subfamily. Monomer. Can also form homodimers and oligomers. It depends on Mg(2+) as a cofactor. The cofactor is Ni(2+).

The enzyme catalyses a tRNA precursor + 2 CTP + ATP = a tRNA with a 3' CCA end + 3 diphosphate. The catalysed reaction is a tRNA with a 3' CCA end + 2 CTP + ATP = a tRNA with a 3' CCACCA end + 3 diphosphate. Its function is as follows. Catalyzes the addition and repair of the essential 3'-terminal CCA sequence in tRNAs without using a nucleic acid template. Adds these three nucleotides in the order of C, C, and A to the tRNA nucleotide-73, using CTP and ATP as substrates and producing inorganic pyrophosphate. tRNA 3'-terminal CCA addition is required both for tRNA processing and repair. Also involved in tRNA surveillance by mediating tandem CCA addition to generate a CCACCA at the 3' terminus of unstable tRNAs. While stable tRNAs receive only 3'-terminal CCA, unstable tRNAs are marked with CCACCA and rapidly degraded. The sequence is that of Multifunctional CCA protein from Pasteurella multocida (strain Pm70).